Consider the following 955-residue polypeptide: Leucine--tRNA ligase (955 aa).

The 'HIGH' region motif lies at 66 to 77 (PYPSGSGLHVGH). The 'KMSKS' region motif lies at 725 to 729 (KMGKS). Lys-728 lines the ATP pocket.

The protein belongs to the class-I aminoacyl-tRNA synthetase family.

It is found in the cytoplasm. The catalysed reaction is tRNA(Leu) + L-leucine + ATP = L-leucyl-tRNA(Leu) + AMP + diphosphate. In Saccharopolyspora erythraea (strain ATCC 11635 / DSM 40517 / JCM 4748 / NBRC 13426 / NCIMB 8594 / NRRL 2338), this protein is Leucine--tRNA ligase.